A 49-amino-acid chain; its full sequence is SPbeta prophage-derived uncharacterized protein YorN (49 aa).

The sequence is that of SPbeta prophage-derived uncharacterized protein YorN (yorN) from Bacillus subtilis (strain 168).